Reading from the N-terminus, the 270-residue chain is Formamidopyrimidine-DNA glycosylase (270 aa).

The Schiff-base intermediate with DNA role is filled by P2. E3 functions as the Proton donor in the catalytic mechanism. The active-site Proton donor; for beta-elimination activity is K58. H90, R109, and R152 together coordinate DNA. The segment at 237–270 (RVYGREGEPCQCGGVVKRIVQGGRSTFFCPRCQK) adopts an FPG-type zinc-finger fold. Catalysis depends on R260, which acts as the Proton donor; for delta-elimination activity.

The protein belongs to the FPG family. Monomer. Zn(2+) is required as a cofactor.

The catalysed reaction is Hydrolysis of DNA containing ring-opened 7-methylguanine residues, releasing 2,6-diamino-4-hydroxy-5-(N-methyl)formamidopyrimidine.. It catalyses the reaction 2'-deoxyribonucleotide-(2'-deoxyribose 5'-phosphate)-2'-deoxyribonucleotide-DNA = a 3'-end 2'-deoxyribonucleotide-(2,3-dehydro-2,3-deoxyribose 5'-phosphate)-DNA + a 5'-end 5'-phospho-2'-deoxyribonucleoside-DNA + H(+). Functionally, involved in base excision repair of DNA damaged by oxidation or by mutagenic agents. Acts as a DNA glycosylase that recognizes and removes damaged bases. Has a preference for oxidized purines, such as 7,8-dihydro-8-oxoguanine (8-oxoG). Has AP (apurinic/apyrimidinic) lyase activity and introduces nicks in the DNA strand. Cleaves the DNA backbone by beta-delta elimination to generate a single-strand break at the site of the removed base with both 3'- and 5'-phosphates. The polypeptide is Formamidopyrimidine-DNA glycosylase (Novosphingobium aromaticivorans (strain ATCC 700278 / DSM 12444 / CCUG 56034 / CIP 105152 / NBRC 16084 / F199)).